The sequence spans 274 residues: Large ribosomal subunit protein uL2 (274 aa).

A disordered region spans residues 223-274 (VAMNPVDHPHGGGEGRTSGGRHPVTPWGVPTKGYKTRSNKRTDKYIVRRRNK).

Belongs to the universal ribosomal protein uL2 family. As to quaternary structure, part of the 50S ribosomal subunit. Forms a bridge to the 30S subunit in the 70S ribosome.

One of the primary rRNA binding proteins. Required for association of the 30S and 50S subunits to form the 70S ribosome, for tRNA binding and peptide bond formation. It has been suggested to have peptidyltransferase activity; this is somewhat controversial. Makes several contacts with the 16S rRNA in the 70S ribosome. The protein is Large ribosomal subunit protein uL2 of Shewanella sp. (strain ANA-3).